Consider the following 549-residue polypeptide: Glucose-6-phosphate isomerase (549 aa).

The active-site Proton donor is Glu353. Active-site residues include His384 and Lys510. The segment at 523–549 (AEPPAAQSDSSTDALVRRYRSERGRTA) is disordered. Residues 537 to 549 (LVRRYRSERGRTA) are compositionally biased toward basic and acidic residues.

The protein belongs to the GPI family.

Its subcellular location is the cytoplasm. It carries out the reaction alpha-D-glucose 6-phosphate = beta-D-fructose 6-phosphate. Its pathway is carbohydrate biosynthesis; gluconeogenesis. It functions in the pathway carbohydrate degradation; glycolysis; D-glyceraldehyde 3-phosphate and glycerone phosphate from D-glucose: step 2/4. In terms of biological role, catalyzes the reversible isomerization of glucose-6-phosphate to fructose-6-phosphate. This Mycolicibacterium gilvum (strain PYR-GCK) (Mycobacterium gilvum (strain PYR-GCK)) protein is Glucose-6-phosphate isomerase.